A 338-amino-acid polypeptide reads, in one-letter code: UDP-glucose 4-epimerase (338 aa).

Residues 11–12 (YI), 31–36 (DNLCNS), 58–59 (DI), 80–84 (FAGLK), Asn-99, Ser-124, Tyr-149, Lys-153, and Phe-178 each bind NAD(+). Ser-124 and Tyr-149 together coordinate substrate. Residue Tyr-149 is the Proton acceptor of the active site. Substrate is bound by residues Asn-179, 199-200 (NL), 216-218 (AVF), Arg-231, 292-295 (RDGD), and Tyr-299.

This sequence belongs to the NAD(P)-dependent epimerase/dehydratase family. In terms of assembly, homodimer. NAD(+) is required as a cofactor.

The enzyme catalyses UDP-alpha-D-glucose = UDP-alpha-D-galactose. It participates in carbohydrate metabolism; galactose metabolism. In terms of biological role, involved in the metabolism of galactose. Catalyzes the conversion of UDP-galactose (UDP-Gal) to UDP-glucose (UDP-Glc) through a mechanism involving the transient reduction of NAD. This chain is UDP-glucose 4-epimerase (galE), found in Salmonella typhi.